The chain runs to 419 residues: Squamosa promoter-binding-like protein 2 (419 aa).

The disordered stretch occupies residues 77–96; sequence SAEVRTHNFTSETGESLPGE. Residues 166-243 form an SBP-type zinc finger; the sequence is TPHCQVEGCN…SDHNARRRKP (78 aa). 8 residues coordinate Zn(2+): C169, C174, C191, H194, C210, C213, H217, and C229. Positions 226–242 match the Bipartite nuclear localization signal motif; the sequence is KRSCRRRLSDHNARRRK. A disordered region spans residues 230 to 249; sequence RRRLSDHNARRRKPNPGRTY.

Requires Zn(2+) as cofactor.

The protein resides in the nucleus. Functionally, trans-acting factor that binds specifically to the consensus nucleotide sequence 5'-TNCGTACAA-3'. The chain is Squamosa promoter-binding-like protein 2 (SPL2) from Arabidopsis thaliana (Mouse-ear cress).